The primary structure comprises 259 residues: tRNA (guanine-N(7)-)-methyltransferase (259 aa).

S-adenosyl-L-methionine-binding positions include glycine 80, 103–104 (EL), 136–137 (NS), and leucine 156. Residue aspartate 159 is part of the active site. Residue 234-236 (TEE) participates in S-adenosyl-L-methionine binding.

It belongs to the class I-like SAM-binding methyltransferase superfamily. TrmB family.

The protein resides in the nucleus. It carries out the reaction guanosine(46) in tRNA + S-adenosyl-L-methionine = N(7)-methylguanosine(46) in tRNA + S-adenosyl-L-homocysteine. Its pathway is tRNA modification; N(7)-methylguanine-tRNA biosynthesis. Catalyzes the formation of N(7)-methylguanine at position 46 (m7G46) in tRNA. The polypeptide is tRNA (guanine-N(7)-)-methyltransferase (Oryza sativa subsp. indica (Rice)).